Here is a 231-residue protein sequence, read N- to C-terminus: Uracil-DNA glycosylase (231 aa).

The active-site Proton acceptor is aspartate 71.

It belongs to the uracil-DNA glycosylase (UDG) superfamily. UNG family.

The protein resides in the cytoplasm. It carries out the reaction Hydrolyzes single-stranded DNA or mismatched double-stranded DNA and polynucleotides, releasing free uracil.. In terms of biological role, excises uracil residues from the DNA which can arise as a result of misincorporation of dUMP residues by DNA polymerase or due to deamination of cytosine. The sequence is that of Uracil-DNA glycosylase from Pseudomonas aeruginosa (strain UCBPP-PA14).